The primary structure comprises 411 residues: Acetyl-coenzyme A carboxylase carboxyl transferase subunit beta, chloroplastic (411 aa).

A CoA carboxyltransferase N-terminal domain is found at 32-302; that stretch reads LWTRCDHCGV…KEQGRIPYGE (271 aa). Residues Cys-36, Cys-39, Cys-55, and Cys-58 each coordinate Zn(2+). The C4-type zinc-finger motif lies at 36 to 58; sequence CDHCGVILYIKHLKENQRVCFGC.

The protein belongs to the AccD/PCCB family. As to quaternary structure, acetyl-CoA carboxylase is a heterohexamer composed of biotin carboxyl carrier protein, biotin carboxylase and 2 subunits each of ACCase subunit alpha and ACCase plastid-coded subunit beta (accD). Zn(2+) serves as cofactor.

It localises to the plastid. Its subcellular location is the chloroplast stroma. The catalysed reaction is N(6)-carboxybiotinyl-L-lysyl-[protein] + acetyl-CoA = N(6)-biotinyl-L-lysyl-[protein] + malonyl-CoA. The protein operates within lipid metabolism; malonyl-CoA biosynthesis; malonyl-CoA from acetyl-CoA: step 1/1. Component of the acetyl coenzyme A carboxylase (ACC) complex. Biotin carboxylase (BC) catalyzes the carboxylation of biotin on its carrier protein (BCCP) and then the CO(2) group is transferred by the transcarboxylase to acetyl-CoA to form malonyl-CoA. This chain is Acetyl-coenzyme A carboxylase carboxyl transferase subunit beta, chloroplastic, found in Chlorella vulgaris (Green alga).